The primary structure comprises 637 residues: Rab11 family-interacting protein 4 (637 aa).

Positions 49 to 84 constitute an EF-hand domain; sequence GQGEEVEKLVKYLDPNDLGRINFKDFCRGVFAMKGC. Ca(2+)-binding residues include Asp62, Asn64, Arg68, and Asp73. Residues 82 to 637 are necessary for interaction with RAB11A, subcellular location, homo- or heterooligomerization; the sequence is KGCEELLKDV…HNPSILEIKH (556 aa). Disordered stretches follow at residues 138–175 and 219–256; these read EEEAMTLAPPEGPQELYTDSPMESTQSLEGSVGSPAEK and YGEGDDVDCAPSSPCPDDETRTNVYSDLGSSVSSSAGQ. Residues 280 to 617 are a coiled coil; sequence KINLLNDLEA…EEINFRLRQY (338 aa). Residues 574–636 enclose the FIP-RBD domain; sequence EAKNLFAAQT…DHNPSILEIK (63 aa).

In terms of assembly, homodimer. Forms a complex with Rab11 (RAB11A or RAB11B) and ARF6. Interacts with RAB11A; the interaction is direct. Forms a heterooligomeric complex with RAB11FIP2, RAB11FIP3 and RAB11FIP5. Interacts with ECPAS. (Microbial infection) Interacts with human cytomegalovirus/HHV-5 protein gM/UL100. As to expression, present at high level in testis (at protein level). Weakly expressed in other tissues.

Its subcellular location is the endosome. It localises to the cytoplasm. The protein localises to the cytoskeleton. The protein resides in the spindle. It is found in the microtubule organizing center. Its subcellular location is the centrosome. It localises to the recycling endosome membrane. The protein localises to the cleavage furrow. The protein resides in the midbody. It is found in the cytoplasmic vesicle. Functionally, acts as a regulator of endocytic traffic by participating in membrane delivery. Required for the abscission step in cytokinesis, possibly by acting as an 'address tag' delivering recycling endosome membranes to the cleavage furrow during late cytokinesis. In case of infection by HCMV (human cytomegalovirus), may participate in egress of the virus out of nucleus; this function is independent of ARF6. The sequence is that of Rab11 family-interacting protein 4 (RAB11FIP4) from Homo sapiens (Human).